A 456-amino-acid chain; its full sequence is MSAAASPRSLTLIGAGLAGCLLAILLSRRGWQITLYERRGDPRIKGYESGRSINLALAERGRHALRQAGAEDAVMAKAVMMRGRMIHPVSGEPQLQRYGRDDSEVIWSIHRAALNVTLLDLAEQAGARVHFYRRLHTVDFDAGYARFIDDRDDQPHEIHFQALVGSDGAGSALRAAMQRKAPVGEHIAFLDHSYKELEIPPRADGGFRIERNALHIWPRGRYMCIALPNDGGTFTVTLFLPNEGMPSFATTRSGDEALALFARDFPDALPLIPQLKEHWEEHPPGLLGTLTRERWHLDGRAVLLGDAAHAMVPFHGQGMNCAFEDCVALAEQLDAHSDLSEAFAAFEAARRDDAAAIQQMALENYLEMRDRVGDAQFLLQRALEQQLQARWPTRFVPHYTMVTFLRTRYAIALARSEIQREILLEATHGHTDLSRIDWVALETVVHARLEPLEGAH.

The protein belongs to the aromatic-ring hydroxylase family. KMO subfamily. Requires FAD as cofactor.

The enzyme catalyses L-kynurenine + NADPH + O2 + H(+) = 3-hydroxy-L-kynurenine + NADP(+) + H2O. It participates in cofactor biosynthesis; NAD(+) biosynthesis; quinolinate from L-kynurenine: step 1/3. Its function is as follows. Catalyzes the hydroxylation of L-kynurenine (L-Kyn) to form 3-hydroxy-L-kynurenine (L-3OHKyn). Required for synthesis of quinolinic acid. This is Kynurenine 3-monooxygenase from Xanthomonas campestris pv. campestris (strain 8004).